The chain runs to 193 residues: Large ribosomal subunit protein uL5 (193 aa).

This sequence belongs to the universal ribosomal protein uL5 family. Part of the 50S ribosomal subunit; part of the 5S rRNA/L5/L18/L25 subcomplex. Contacts the 5S rRNA and the P site tRNA. Forms a bridge to the 30S subunit in the 70S ribosome.

In terms of biological role, this is one of the proteins that bind and probably mediate the attachment of the 5S RNA into the large ribosomal subunit, where it forms part of the central protuberance. In the 70S ribosome it contacts protein S13 of the 30S subunit (bridge B1b), connecting the 2 subunits; this bridge is implicated in subunit movement. Contacts the P site tRNA; the 5S rRNA and some of its associated proteins might help stabilize positioning of ribosome-bound tRNAs. This Novosphingobium aromaticivorans (strain ATCC 700278 / DSM 12444 / CCUG 56034 / CIP 105152 / NBRC 16084 / F199) protein is Large ribosomal subunit protein uL5.